The chain runs to 432 residues: Bouquet formation protein 4 (432 aa).

The disordered stretch occupies residues 1–21 (MTENEKSRSLPAERNPLYKDD). The region spanning 38–147 (EFPDGPATFV…SSTPSTYATP (110 aa)) is the HTH APSES-type domain. Residues 73–94 (ATSMFRSAFPKATQEEEDLEMR) constitute a DNA-binding region (H-T-H motif). Low complexity-rich tracts occupy residues 139 to 152 (STPS…RPTA) and 163 to 172 (ESSTSATTTS). Disordered regions lie at residues 139–283 (STPS…GKIR) and 364–384 (KSSI…FEEN). The span at 180 to 228 (RLAEHLENSKKTILQHDNKEEDKEIHSEENETKDEIKSEKKEPEIKKQE) shows a compositional bias: basic and acidic residues. The segment covering 229–241 (GGSSTEKVGQPSS) has biased composition (polar residues).

As to quaternary structure, interacts with rap1.

The protein resides in the cytoplasm. It localises to the nucleus. Its subcellular location is the nucleus inner membrane. Connects telomeres to the nuclear envelop (NE) during both vegetative growth and meiosis. This connection ensures clustering of telomeres to the spindle pole body (SPB) when cells enter meiotic prophase. The chain is Bouquet formation protein 4 (bqt4) from Schizosaccharomyces pombe (strain 972 / ATCC 24843) (Fission yeast).